The sequence spans 92 residues: UPF0250 protein COSY_0496 (92 aa).

Belongs to the UPF0250 family.

The protein is UPF0250 protein COSY_0496 of Vesicomyosocius okutanii subsp. Calyptogena okutanii (strain HA).